The following is a 72-amino-acid chain: Sec-independent protein translocase protein TatA (72 aa).

A helical transmembrane segment spans residues 1-21 (MGSFSIWHWLIVLAVVLLLFG). A disordered region spans residues 43 to 72 (MADEDAKEDPRTIDAKAEEPVKDVKKTTKS). The span at 50–72 (EDPRTIDAKAEEPVKDVKKTTKS) shows a compositional bias: basic and acidic residues.

This sequence belongs to the TatA/E family. In terms of assembly, the Tat system comprises two distinct complexes: a TatABC complex, containing multiple copies of TatA, TatB and TatC subunits, and a separate TatA complex, containing only TatA subunits. Substrates initially bind to the TatABC complex, which probably triggers association of the separate TatA complex to form the active translocon.

The protein resides in the cell inner membrane. Part of the twin-arginine translocation (Tat) system that transports large folded proteins containing a characteristic twin-arginine motif in their signal peptide across membranes. TatA could form the protein-conducting channel of the Tat system. The polypeptide is Sec-independent protein translocase protein TatA (Brucella suis biovar 1 (strain 1330)).